A 247-amino-acid polypeptide reads, in one-letter code: UPF0309 protein GWCH70_1414 (247 aa).

The 184-residue stretch at 31-214 folds into the SIS domain; the sequence is VSEAIQKGGI…VLMAENGFEP (184 aa).

It belongs to the UPF0309 family.

The polypeptide is UPF0309 protein GWCH70_1414 (Geobacillus sp. (strain WCH70)).